A 68-amino-acid chain; its full sequence is DNA gyrase inhibitor YacG (68 aa).

Zn(2+)-binding residues include cysteine 14, cysteine 17, cysteine 29, and cysteine 33.

The protein belongs to the DNA gyrase inhibitor YacG family. As to quaternary structure, interacts with GyrB. The cofactor is Zn(2+).

In terms of biological role, inhibits all the catalytic activities of DNA gyrase by preventing its interaction with DNA. Acts by binding directly to the C-terminal domain of GyrB, which probably disrupts DNA binding by the gyrase. This Azorhizobium caulinodans (strain ATCC 43989 / DSM 5975 / JCM 20966 / LMG 6465 / NBRC 14845 / NCIMB 13405 / ORS 571) protein is DNA gyrase inhibitor YacG.